Consider the following 296-residue polypeptide: NAD kinase (296 aa).

Asp-73 serves as the catalytic Proton acceptor. Residues 73–74 (DG), Lys-78, 151–152 (NE), Arg-178, Asp-180, and 191–196 (TAHAMS) contribute to the NAD(+) site.

The protein belongs to the NAD kinase family. The cofactor is a divalent metal cation.

The protein resides in the cytoplasm. It carries out the reaction NAD(+) + ATP = ADP + NADP(+) + H(+). Functionally, involved in the regulation of the intracellular balance of NAD and NADP, and is a key enzyme in the biosynthesis of NADP. Catalyzes specifically the phosphorylation on 2'-hydroxyl of the adenosine moiety of NAD to yield NADP. This is NAD kinase from Francisella tularensis subsp. holarctica (strain FTNF002-00 / FTA).